The chain runs to 317 residues: Transaldolase 2 (317 aa).

Catalysis depends on lysine 132, which acts as the Schiff-base intermediate with substrate.

Belongs to the transaldolase family. Type 1 subfamily. Homodimer.

Its subcellular location is the cytoplasm. It carries out the reaction D-sedoheptulose 7-phosphate + D-glyceraldehyde 3-phosphate = D-erythrose 4-phosphate + beta-D-fructose 6-phosphate. The protein operates within carbohydrate degradation; pentose phosphate pathway; D-glyceraldehyde 3-phosphate and beta-D-fructose 6-phosphate from D-ribose 5-phosphate and D-xylulose 5-phosphate (non-oxidative stage): step 2/3. Transaldolase is important for the balance of metabolites in the pentose-phosphate pathway. The chain is Transaldolase 2 from Pectobacterium atrosepticum (strain SCRI 1043 / ATCC BAA-672) (Erwinia carotovora subsp. atroseptica).